The primary structure comprises 240 residues: Probable septum site-determining protein MinC (240 aa).

This sequence belongs to the MinC family. Interacts with MinD and FtsZ.

Cell division inhibitor that blocks the formation of polar Z ring septums. Rapidly oscillates between the poles of the cell to destabilize FtsZ filaments that have formed before they mature into polar Z rings. Prevents FtsZ polymerization. The polypeptide is Probable septum site-determining protein MinC (Buchnera aphidicola subsp. Cinara cedri (strain Cc)).